We begin with the raw amino-acid sequence, 231 residues long: Small ribosomal subunit protein uS2c (231 aa).

The protein belongs to the universal ribosomal protein uS2 family.

It localises to the plastid. The protein resides in the chloroplast. In Gracilaria tenuistipitata var. liui (Red alga), this protein is Small ribosomal subunit protein uS2c (rps2).